A 365-amino-acid polypeptide reads, in one-letter code: Glucose 1-dehydrogenase 1 (365 aa).

D38 is a Zn(2+) binding site. T40 provides a ligand contact to substrate. Zn(2+) contacts are provided by H63 and E64. Substrate is bound by residues E115 and E151. Zn(2+) is bound at residue E151. NADP(+)-binding positions include 182 to 185 (NGSL), 207 to 208 (RR), 272 to 274 (LGV), and 301 to 303 (SVN). Residue N303 coordinates substrate.

The protein belongs to the zinc-containing alcohol dehydrogenase family. Glucose 1-dehydrogenase subfamily. Requires Zn(2+) as cofactor.

It catalyses the reaction D-glucose + NAD(+) = D-glucono-1,5-lactone + NADH + H(+). The catalysed reaction is D-glucose + NADP(+) = D-glucono-1,5-lactone + NADPH + H(+). Its function is as follows. Catalyzes the NAD(P)(+)-dependent oxidation of D-glucose to D-gluconate via gluconolactone. Can utilize both NAD(+) and NADP(+) as electron acceptor. Is involved in the degradation of glucose through a modified Entner-Doudoroff pathway. In Haloterrigena turkmenica (strain ATCC 51198 / DSM 5511 / JCM 9101 / NCIMB 13204 / VKM B-1734 / 4k) (Halococcus turkmenicus), this protein is Glucose 1-dehydrogenase 1.